Here is a 373-residue protein sequence, read N- to C-terminus: UPF0725 protein At1g23950 (373 aa).

Threonine 2 is subject to N-acetylthreonine.

Belongs to the UPF0725 (EMB2204) family.

The protein is UPF0725 protein At1g23950 of Arabidopsis thaliana (Mouse-ear cress).